A 344-amino-acid chain; its full sequence is 4-hydroxy-3-methylbut-2-en-1-yl diphosphate synthase (flavodoxin) (344 aa).

[4Fe-4S] cluster is bound by residues cysteine 253, cysteine 256, cysteine 288, and glutamate 295.

It belongs to the IspG family. [4Fe-4S] cluster is required as a cofactor.

The catalysed reaction is (2E)-4-hydroxy-3-methylbut-2-enyl diphosphate + oxidized [flavodoxin] + H2O + 2 H(+) = 2-C-methyl-D-erythritol 2,4-cyclic diphosphate + reduced [flavodoxin]. It functions in the pathway isoprenoid biosynthesis; isopentenyl diphosphate biosynthesis via DXP pathway; isopentenyl diphosphate from 1-deoxy-D-xylulose 5-phosphate: step 5/6. Its function is as follows. Converts 2C-methyl-D-erythritol 2,4-cyclodiphosphate (ME-2,4cPP) into 1-hydroxy-2-methyl-2-(E)-butenyl 4-diphosphate. The chain is 4-hydroxy-3-methylbut-2-en-1-yl diphosphate synthase (flavodoxin) from Thermotoga maritima (strain ATCC 43589 / DSM 3109 / JCM 10099 / NBRC 100826 / MSB8).